Consider the following 123-residue polypeptide: Large ribosomal subunit protein bL20 (123 aa).

This sequence belongs to the bacterial ribosomal protein bL20 family.

Functionally, binds directly to 23S ribosomal RNA and is necessary for the in vitro assembly process of the 50S ribosomal subunit. It is not involved in the protein synthesizing functions of that subunit. The polypeptide is Large ribosomal subunit protein bL20 (rplT) (Chlamydia trachomatis serovar D (strain ATCC VR-885 / DSM 19411 / UW-3/Cx)).